The primary structure comprises 56 residues: Preprotein translocase subunit SecG (56 aa).

Over 1–29 (MAKEKATLPPTGAGLMRFFDEDTKAVKIS) the chain is Cytoplasmic. Residues 30 to 51 (PRGVIALTLILVALEILLHAFG) form a helical membrane-spanning segment. Residues 52 to 56 (PQIFG) are Extracellular-facing.

The protein belongs to the SEC61-beta family. Component of the protein translocase complex. Heterotrimer consisting of alpha (SecY), beta (SecG) and gamma (SecE) subunits. Can form oligomers of the heterotrimer.

The protein resides in the cell membrane. Involved in protein export. The function of the beta subunit is unknown, but it may be involved in stabilization of the trimeric complex. This is Preprotein translocase subunit SecG from Thermococcus onnurineus (strain NA1).